The primary structure comprises 197 residues: Cyclin-dependent kinase inhibitor 1B (197 aa).

The segment covering 1–11 has biased composition (polar residues); sequence MSNVRVSNGSP. The segment at 1-34 is disordered; sequence MSNVRVSNGSPSLERMDARQAEHPKPSACRNLFG. A Phosphoserine; by UHMK1 modification is found at S10. Positions 14–25 are enriched in basic and acidic residues; it reads ERMDARQAEHPK. The interaction with CDK2 stretch occupies residues 51-91; it reads DMEEASQRKWNFDFQNHKPLEGRYEWQEVERGSLPEFYYRP. Y74 bears the Phosphotyrosine; by SRC mark. The segment at 86–197 is disordered; it reads EFYYRPPRPP…PKKPGLRRQT (112 aa). At Y88 the chain carries Phosphotyrosine; by ABL, LYN, SRC and JAK2. At Y89 the chain carries Phosphotyrosine. The span at 104–113 shows a compositional bias: polar residues; it reads QESQDVSGSR. Residues 153-169 carry the Nuclear localization signal motif; it reads KRPAAEDSSSQNKRANR. A Phosphothreonine; by CaMK1 modification is found at T170. The span at 175–186 shows a compositional bias: polar residues; that stretch reads SDGSPNAGTVEQ. Phosphothreonine; by PKB/AKT1, CDK1 and CDK2 is present on T187. T197 is modified (phosphothreonine; by CaMK1, PKB/AKT1, RPS6KA1, RPS6KA3 and PIM1).

It belongs to the CDI family. Forms a ternary complex composed of CCNE1, CDK2 and CDKN1B. Interacts directly with CCNE1; the interaction is inhibited by CDK2-dependent phosphorylation on Thr-187. Interacts with COPS5, subunit of the COP9 signalosome complex; the interaction leads to CDKN1B degradation. Interacts with NUP50; the interaction leads to nuclear import and degradation of phosphorylated CDKN1B. Interacts with CCND1 and SNX6. Interacts (Thr-197-phosphorylated form) with 14-3-3 proteins, binds strongly YWHAQ, weakly YWHAE and YWHAH, but not YWHAB nor YWHAZ; the interaction with YWHAQ results in translocation to the cytoplasm. Interacts with AKT1 and LYN; the interactions lead to cytoplasmic mislocation, phosphorylation of CDKN1B and inhibition of cell cycle arrest. Forms a ternary complex with CCNA2 and CDK2; CDKN1B inhibits the kinase activity of CDK2 through conformational rearrangements. Interacts (unphosphorylated form) with CDK2. Forms a complex with CDK2 and SPDYA, but does not directly interact with SPDYA. Forms a ternary complex composed of cyclin D, CDK4 and CDKN1B. Interacts (phosphorylated on Tyr-88 and Tyr-89) with CDK4; the interaction is required for cyclin D and CDK4 complex assembly, induces nuclear translocation and activates the CDK4 kinase activity. Interacts with GRB2. Interacts with PIM1. Identified in a complex with SKP1, SKP2 and CKS1B. Interacts with UHMK1; the interaction leads to cytoplasmic mislocation, phosphorylation of CDKN1B and inhibition of cell cycle arrest. Also interacts with CDK1. Dephosphorylated on Thr-187 by PPM1H, leading to CDKN1B stability. In terms of processing, phosphorylated; phosphorylation occurs on serine, threonine and tyrosine residues. Phosphorylation on Ser-10 is the major site of phosphorylation in resting cells, takes place at the G(0)-G(1) phase and leads to protein stability. Phosphorylation on other sites is greatly enhanced by mitogens, growth factors, MYC and in certain cancer cell lines. The phosphorylated form found in the cytoplasm is inactivate. Phosphorylation on Thr-197 is required for interaction with 14-3-3 proteins. Phosphorylation on Thr-187, by CDK1 and CDK2 leads to protein ubiquitination and proteasomal degradation. Tyrosine phosphorylation promotes this process. Phosphorylation by PKB/AKT1 can be suppressed by LY294002, an inhibitor of the catalytic subunit of PI3K. Phosphorylation on Tyr-88 and Tyr-89 has no effect on binding CDK2, but is required for binding CDK4. Dephosphorylated on tyrosine residues by G-CSF. Dephosphorylated on Thr-187 by PPM1H, leading to CDKN1B stability. Post-translationally, ubiquitinated; in the cytoplasm by the KPC complex (composed of RNF123/KPC1 and UBAC1/KPC2) and, in the nucleus, by SCF(SKP2). The latter requires prior phosphorylation on Thr-187. Ubiquitinated; by a TRIM21-containing SCF(SKP2)-like complex; leads to its degradation. Subject to degradation in the lysosome. Interaction with SNX6 promotes lysosomal degradation.

It localises to the nucleus. The protein resides in the cytoplasm. The protein localises to the endosome. Its function is as follows. Important regulator of cell cycle progression. Inhibits the kinase activity of CDK2 bound to cyclin A, but has little inhibitory activity on CDK2 bound to SPDYA. Involved in G1 arrest. Potent inhibitor of cyclin E- and cyclin A-CDK2 complexes. Forms a complex with cyclin type D-CDK4 complexes and is involved in the assembly, stability, and modulation of CCND1-CDK4 complex activation. Acts either as an inhibitor or an activator of cyclin type D-CDK4 complexes depending on its phosphorylation state and/or stoichometry. The protein is Cyclin-dependent kinase inhibitor 1B (Cdkn1b) of Mus musculus (Mouse).